Here is a 380-residue protein sequence, read N- to C-terminus: Histidinol-phosphate aminotransferase (380 aa).

Residue K235 is modified to N6-(pyridoxal phosphate)lysine.

This sequence belongs to the class-II pyridoxal-phosphate-dependent aminotransferase family. Histidinol-phosphate aminotransferase subfamily. As to quaternary structure, homodimer. The cofactor is pyridoxal 5'-phosphate.

The catalysed reaction is L-histidinol phosphate + 2-oxoglutarate = 3-(imidazol-4-yl)-2-oxopropyl phosphate + L-glutamate. The protein operates within amino-acid biosynthesis; L-histidine biosynthesis; L-histidine from 5-phospho-alpha-D-ribose 1-diphosphate: step 7/9. The polypeptide is Histidinol-phosphate aminotransferase (Rhodococcus jostii (strain RHA1)).